The following is a 231-amino-acid chain: Lytic polysaccharide monooxygenase-like protein X325 (231 aa).

Residues 1–17 (MRLSLLVTLALTALIEA) form the signal peptide. H18 provides a ligand contact to Cu(2+). N34, N55, N98, N133, N174, and N180 each carry an N-linked (GlcNAc...) asparagine glycan. Cystine bridges form between C47–C157 and C122–C178. I202 carries GPI-anchor amidated isoleucine lipidation. A propeptide spans 203–231 (ASTTTGSAPRYYSWAGWLPLVAGAIWMAL) (removed in mature form).

This sequence belongs to the X325 family. Cu(2+) is required as a cofactor.

The protein localises to the cell membrane. Functionally, lytic polysaccharide monooxygenase-like protein that has diverged to biological functions other than polysaccharide degradation since it does not perform oxidative cleavage of polysaccharides. Acts as a cell surface-bound protein that functions in the copper-accumulation pathway. May also act as the major cell wall sensor that regulates MAP kinase-dependent hyphal anastomosis, the fusion of hyphal cells. This Hypocrea jecorina (strain QM6a) (Trichoderma reesei) protein is Lytic polysaccharide monooxygenase-like protein X325.